A 723-amino-acid polypeptide reads, in one-letter code: Malate synthase G (723 aa).

Acetyl-CoA-binding positions include Val118, 125-126, Ser274, and Arg311; that span reads RY. The active-site Proton acceptor is Arg338. Glyoxylate-binding positions include Arg338, Glu427, and 452 to 455; that span reads GFLD. Mg(2+) contacts are provided by Glu427 and Asp455. Pro536 contacts acetyl-CoA. Position 617 is a cysteine sulfenic acid (-SOH) (Cys617). Asp631 (proton donor) is an active-site residue. A Cysteine sulfenic acid (-SOH) modification is found at Cys688.

This sequence belongs to the malate synthase family. GlcB subfamily. In terms of assembly, monomer. Mg(2+) is required as a cofactor.

Its subcellular location is the cytoplasm. The catalysed reaction is glyoxylate + acetyl-CoA + H2O = (S)-malate + CoA + H(+). It functions in the pathway carbohydrate metabolism; glyoxylate cycle; (S)-malate from isocitrate: step 2/2. In terms of biological role, involved in the glycolate utilization. Catalyzes the condensation and subsequent hydrolysis of acetyl-coenzyme A (acetyl-CoA) and glyoxylate to form malate and CoA. The chain is Malate synthase G from Shigella flexneri.